Here is a 285-residue protein sequence, read N- to C-terminus: MLVRPPAVAGTFYPADAEELIRLIEWSFTHPLGPGEVPEVSPVRRKASVGYMVPHAGYIYSGPVAAWSYYHLAQEGAPETVVIIGPNHTGLGPAVSVMPPSIWETPLGGVKTDDEAISELLKVSNVVEEDYSAHAYEHSLEVQLPFLQYLFGDSFRIVPIVMKVQTPSVARLLMQSIKEAMENLGRDYVVLSSSDLNHYEPHDITVEKDMLALEKIVNLDPEGLQEVLVKYDISMCGPGPVMVNMYLDKEYGAERAILLKHATSGDTSGDKSAVVGYAAVKFPLP.

It belongs to the MEMO1 family.

This Ignicoccus hospitalis (strain KIN4/I / DSM 18386 / JCM 14125) protein is MEMO1 family protein Igni_0992.